We begin with the raw amino-acid sequence, 553 residues long: Solute carrier family 22 member 12 (553 aa).

Residues 16-36 (FQLLQAVALVTPILWVTTQNM) form a helical membrane-spanning segment. N-linked (GlcNAc...) asparagine glycans are attached at residues Asn-56, Asn-102, and Asn-107. Transmembrane regions (helical) follow at residues 146–166 (PMAQSIFLAGILVGAAVCGHA), 182–202 (LVSVSGTIAALMPTFPLYCLF), 204–224 (FLVASAVAGVMMNTASLLMEW), 232–252 (LMMTLNALGFSFGQVLTGSVA), 260–280 (MLQLAVSAPFFLFFVYSWWLP), 351–371 (FISMLCWFAFGFTFYGLALDL), 378–398 (IFLLQALIGIVDLPVKMGSLL), 407–427 (LCQASSLVLPGLCILANILVP), 435–455 (SSLAVLGLGSLGAAFTCVTIF), 466–486 (MTAVGLGQVAARGGAMLGPLV), and 495–515 (WLPLLVYGVVPVLSGLAALLL). Phosphoserine is present on Ser-534.

It belongs to the major facilitator (TC 2.A.1) superfamily. Organic cation transporter (TC 2.A.1.19) family. As to quaternary structure, interacts with PDZK1. N-glycosylated. In terms of tissue distribution, expressed in the proximal tubular epithelial cells in kidney.

The protein localises to the apical cell membrane. It catalyses the reaction urate(out) + (S)-lactate(in) = urate(in) + (S)-lactate(out). The catalysed reaction is nicotinate(in) + urate(out) = nicotinate(out) + urate(in). It carries out the reaction urate(out) + n chloride(in) = urate(in) + n chloride(out). The enzyme catalyses orotate(out) + nicotinate(in) = orotate(in) + nicotinate(out). Its function is as follows. Electroneutral antiporter that translocates urate across the apical membrane of proximal tubular cells in exchange for monovalent organic or inorganic anions. Involved in renal reabsorption of urate and helps maintaining blood levels of uric acid. Mediates urate uptake by an exchange with organic anions such as (S)-lactate and nicotinate, and inorganic anion Cl(-). Other inorganic anions such as Br(-), I(-) and NO3(-) may also act as counteranions that exchange for urate. Also mediates orotate tubular uptake coupled with nicotinate efflux and to a lesser extent with lactate efflux, therefore displaying a potential role in orotate renal reabsorption. Orotate transport is Cl(-)-dependent. This chain is Solute carrier family 22 member 12 (Slc22a12), found in Rattus norvegicus (Rat).